A 438-amino-acid chain; its full sequence is Coenzyme A disulfide reductase (438 aa).

FAD is bound at residue 8–33 (GAVAGGATCASQIRRLDKESDIIIFE). 5 residues coordinate substrate: Thr15, Gln19, Arg22, Ser39, and Asn42. Cys43 functions as the Nucleophile in the catalytic mechanism. Catalysis depends on Cys43, which acts as the Redox-active. Lys71 serves as a coordination point for substrate. 151 to 166 (VLVIGAGYVSLEVLEN) is an NADP(+) binding site. 267–277 (TNVPNIYAIGD) provides a ligand contact to FAD. Residue His299 participates in substrate binding. Tyr419 contacts FAD. A substrate-binding site is contributed by Lys427.

It belongs to the class-III pyridine nucleotide-disulfide oxidoreductase family. Homodimer. FAD serves as cofactor.

The catalysed reaction is NADP(+) + 2 CoA = CoA-disulfide + NADPH + H(+). In terms of biological role, catalyzes specifically the NADPH-dependent reduction of coenzyme A disulfide. The chain is Coenzyme A disulfide reductase from Staphylococcus aureus (strain Mu3 / ATCC 700698).